We begin with the raw amino-acid sequence, 616 residues long: Chaperone protein HscA (616 aa).

It belongs to the heat shock protein 70 family.

Functionally, chaperone involved in the maturation of iron-sulfur cluster-containing proteins. Has a low intrinsic ATPase activity which is markedly stimulated by HscB. Involved in the maturation of IscU. This is Chaperone protein HscA from Escherichia coli O17:K52:H18 (strain UMN026 / ExPEC).